The following is a 293-amino-acid chain: ATP synthase gamma chain (293 aa).

This sequence belongs to the ATPase gamma chain family. As to quaternary structure, F-type ATPases have 2 components, CF(1) - the catalytic core - and CF(0) - the membrane proton channel. CF(1) has five subunits: alpha(3), beta(3), gamma(1), delta(1), epsilon(1). CF(0) has three main subunits: a, b and c.

The protein resides in the cell inner membrane. In terms of biological role, produces ATP from ADP in the presence of a proton gradient across the membrane. The gamma chain is believed to be important in regulating ATPase activity and the flow of protons through the CF(0) complex. The polypeptide is ATP synthase gamma chain (Beijerinckia indica subsp. indica (strain ATCC 9039 / DSM 1715 / NCIMB 8712)).